A 575-amino-acid chain; its full sequence is MIKSTNIQAIGSGIMHQINNVYSLTPLSLPMELTPSCNEFYLKTWSEWEKNGTPGEQRNIAFNRLKICLQNQEAELNLSELDLKTLPDLPPQITTLEIRKNLLTHLPDLPPMLKVIHAQFNQLESLPALPETLEELNAGDNKIKELPFLPENLTHLRVHNNRLHILPLLPPELKLLVVSGNRLDSIPPFPDKLEGLALANNFIEQLPELPFSMNRAVLMNNNLTTLPESVLRLAQNAFVNVAGNPLSGHTMRTLQQITTGPDYSGPQIFFSMGNSATISAPEHSLADAVTAWFPENKQSDVSQIWHAFEHEEHANTFSAFLDRLSDTVSARNTSGFREQVAAWLEKLSASAELRQQSFAVAADATESCEDRVALTWNNLRKTLLVHQASEGLFDNDTGALLSLGREMFRLEILEDIARDKVRTLHFVDEIEVYLAFQTMLAEKLQLSTAVKEMRFYGVSGVTANDLRTAEAMVRSREENEFTDWFSLWGPWHAVLKRTEADRWAQAEEQKYEMLENEYSQRVADRLKASGLSGDADAEREAGAQVMRETEQQIYRQLTDEVLALRLSENGSNHIA.

The segment at 1–270 is interaction with target proteins; it reads MIKSTNIQAI…PDYSGPQIFF (270 aa). 8 LRR repeats span residues 69 to 90, 91 to 115, 117 to 130, 131 to 150, 151 to 170, 171 to 195, 197 to 209, and 210 to 233; these read LQNQEAELNLSELDLKTLPDLP, PQITTLEIRKNLLTHLPDLPPMLKV, HAQFNQLESLPALP, ETLEELNAGDNKIKELPFLP, ENLTHLRVHNNRLHILPLLP, PELKLLVVSGNRLDSIPPFPDKLEG, ALANNFIEQLPEL, and PFSMNRAVLMNNNLTTLPESVLRL. Positions 271–281 are linker; sequence SMGNSATISAP. Positions 282–575 are E3 ubiquitin-protein ligase catalytic domain; it reads EHSLADAVTA…LSENGSNHIA (294 aa). Residues 284–575 form the NEL domain; sequence SLADAVTAWF…LSENGSNHIA (292 aa). C368 (glycyl thioester intermediate) is an active-site residue.

It belongs to the LRR-containing bacterial E3 ligase family. As to quaternary structure, interacts with human RBCK1/HOIL-1 and RNF31/HOIP components of the LUBAC complex. Ubiquitinated in the presence of host E1 ubiquitin-activating enzyme, E2 ubiquitin-conjugating enzyme and ubiquitin.

It is found in the secreted. The protein localises to the host cytoplasm. It catalyses the reaction S-ubiquitinyl-[E2 ubiquitin-conjugating enzyme]-L-cysteine + [acceptor protein]-L-lysine = [E2 ubiquitin-conjugating enzyme]-L-cysteine + N(6)-ubiquitinyl-[acceptor protein]-L-lysine.. It participates in protein modification; protein ubiquitination. With respect to regulation, exists in an autoinhibited state in the absence of substrate protein, probably due to interactions of the leucine-rich repeat domain with the catalytic domain. Is activated upon binding to a substrate protein. Its function is as follows. E3 ubiquitin-protein ligase effector that inhibits host cell innate immunity during bacterial infection by catalyzing 'Lys-48'-linked polyubiquitination and subsequent degradation of host RNF31/HOIP and RBCK1/HOIL-1. Host RNF31/HOIP is the catalytic component of the LUBAC complex, which conjugates linear ('Met-1'-linked) polyubiquitin chains at the surface of bacteria invading the host cytosol to form the ubiquitin coat surrounding bacteria. The bacterial ubiquitin coat acts as an 'eat-me' signal for xenophagy and promotes NF-kappa-B activation. By promoting degradation of host RNF31/HOIP, IpaH1.4 prevents formation of the bacterial ubiquitin coat and activation of host cell innate immunity. The polypeptide is E3 ubiquitin-protein ligase IpaH1.4 (Shigella flexneri).